Consider the following 467-residue polypeptide: Nuclear distribution protein nudF 1 (467 aa).

The LisH domain occupies 9–41 (QAEELHKSIIAYLASVNLSESATTLRAELGDAV). Positions 60–87 (TSVVRLQKKIMDLESRCAALQSELDSAT) form a coiled coil. WD repeat units lie at residues 113 to 154 (SHRS…RTVK), 156 to 196 (HTKA…KNIR), 200 to 247 (GHDH…CVKT), 250 to 289 (GHVDWVRAVAPSIDGRFLFAAGDDRIPRLWDLSAAETRST), 292 to 352 (GHEH…IKTL), 354 to 393 (GHDNWVRALAFHPGGKYLLSVSDDKTIRCWDLTQECKCVR), 398 to 428 (THEHFVTCLRWAPPLIKDSGANGDAGANGTP), and 429 to 466 (AATTTSNGARQDPNAANKISIRCVIATGSVDQKVRVFA). Low complexity predominate over residues 417-437 (GANGDAGANGTPAATTTSNGA). Residues 417–441 (GANGDAGANGTPAATTTSNGARQDP) form a disordered region.

This sequence belongs to the WD repeat LIS1/nudF family. In terms of assembly, self-associates. Interacts with nudE and dynein.

It is found in the cytoplasm. Its subcellular location is the cytoskeleton. The protein localises to the spindle pole. Positively regulates the activity of the minus-end directed microtubule motor protein dynein. May enhance dynein-mediated microtubule sliding by targeting dynein to the microtubule plus end. Required for nuclear migration during vegetative growth as well as development. Required for retrograde early endosome (EE) transport from the hyphal tip. Required for localization of dynein to the mitotic spindle poles. Recruits additional proteins to the dynein complex at SPBs. In Aspergillus clavatus (strain ATCC 1007 / CBS 513.65 / DSM 816 / NCTC 3887 / NRRL 1 / QM 1276 / 107), this protein is Nuclear distribution protein nudF 1.